The primary structure comprises 466 residues: Cysteine--tRNA ligase (466 aa).

C28 provides a ligand contact to Zn(2+). A 'HIGH' region motif is present at residues 30-40 (PTVYNFFHIGN). C208, H233, and E237 together coordinate Zn(2+). The short motif at 265–269 (KMSKS) is the 'KMSKS' region element. Position 268 (K268) interacts with ATP.

It belongs to the class-I aminoacyl-tRNA synthetase family. In terms of assembly, monomer. It depends on Zn(2+) as a cofactor.

It is found in the cytoplasm. It catalyses the reaction tRNA(Cys) + L-cysteine + ATP = L-cysteinyl-tRNA(Cys) + AMP + diphosphate. In Clostridium perfringens (strain SM101 / Type A), this protein is Cysteine--tRNA ligase.